Reading from the N-terminus, the 90-residue chain is Mitochondrial import inner membrane translocase subunit Tim8 A (90 aa).

Positions 36–59 match the Twin CX3C motif motif; it reads CWEKCMDKPGPKLDSRTEVCFVNC. 2 disulfides stabilise this stretch: Cys36/Cys59 and Cys40/Cys55.

This sequence belongs to the small Tim family. In terms of assembly, heterohexamer; composed of 3 copies of TIMM8A and 3 copies of TIMM13, named soluble 70 kDa complex. Associates with the TIM22 complex, whose core is composed of TIMM22.

It localises to the mitochondrion inner membrane. Functionally, mitochondrial intermembrane chaperone that participates in the import and insertion of some multi-pass transmembrane proteins into the mitochondrial inner membrane. Also required for the transfer of beta-barrel precursors from the TOM complex to the sorting and assembly machinery (SAM complex) of the outer membrane. Acts as a chaperone-like protein that protects the hydrophobic precursors from aggregation and guide them through the mitochondrial intermembrane space. The TIMM8-TIMM13 complex mediates the import of some proteins while the predominant TIMM9-TIMM10 70 kDa complex mediates the import of much more proteins. The sequence is that of Mitochondrial import inner membrane translocase subunit Tim8 A (timm8a) from Danio rerio (Zebrafish).